The following is a 758-amino-acid chain: Probable adenosylcobalamin-dependent ribonucleoside-triphosphate reductase (758 aa).

A disulfide bridge connects residues cysteine 194 and cysteine 459. The interval 233–256 is disordered; sequence IIIKGQLPPPPPQQQPQQQQQQHG. Catalysis depends on residues cysteine 448 and glutamate 450.

It belongs to the class II ribonucleoside-triphosphate reductase family. As to quaternary structure, monomer. It depends on adenosylcob(III)alamin as a cofactor.

It carries out the reaction a 2'-deoxyribonucleoside 5'-triphosphate + [thioredoxin]-disulfide + H2O = a ribonucleoside 5'-triphosphate + [thioredoxin]-dithiol. This is Probable adenosylcobalamin-dependent ribonucleoside-triphosphate reductase (rtpR) from Dictyostelium discoideum (Social amoeba).